The chain runs to 300 residues: MVDIKVVSQRSKKEVGSFSTSSSTTVGELKKQISSKTRLGTERIRLAVPSKTSKLPNAFEALGKDSDLVSKHVGADSTLYFKDLGPQISWSLVFICEYAGPLFVYPIFYFLSNLIYGTDSPKSFAQKVALVCYSLHYIKRIYETIFVHRFSHGTMPIFNLFKNCSYYWGCTAMVSYFVNHPLYTEAPIERVYLGLGLWIIGEVFNYICHIQLRNLRPAGSTERKIPRGLLFEFVSCPNYTVEILSWIGFSILTQTLTSWIFALMGAAQMWIWAVGKHRRYRKEFGDKYPKSRKILIPFLL.

A helical membrane pass occupies residues 91–111 (SLVFICEYAGPLFVYPIFYFL). Asparagine 163 carries N-linked (GlcNAc...) asparagine glycosylation. The chain crosses the membrane as a helical span at residues 191-211 (VYLGLGLWIIGEVFNYICHIQ). Asparagine 238 carries N-linked (GlcNAc...) asparagine glycosylation. A helical transmembrane segment spans residues 243 to 263 (ILSWIGFSILTQTLTSWIFAL).

This sequence belongs to the steroid 5-alpha reductase family.

It localises to the endoplasmic reticulum membrane. It catalyses the reaction a very-long-chain 2,3-saturated fatty acyl-CoA + NADP(+) = a very-long-chain (2E)-enoyl-CoA + NADPH + H(+). It functions in the pathway lipid metabolism; fatty acid biosynthesis. Catalyzes the last of the four reactions of the long-chain fatty acids elongation cycle. This endoplasmic reticulum-bound enzymatic process, allows the addition of 2 carbons to the chain of long- and very long-chain fatty acids/VLCFAs per cycle. This enzyme reduces the trans-2,3-enoyl-CoA fatty acid intermediate to an acyl-CoA that can be further elongated by entering a new cycle of elongation. Thereby, it participates in the production of VLCFAs of different chain lengths that are involved in multiple biological processes as precursors of membrane lipids and lipid mediators. The sequence is that of Very-long-chain enoyl-CoA reductase (gpsn2) from Dictyostelium discoideum (Social amoeba).